The sequence spans 351 residues: Protein pelota homolog (351 aa).

The protein belongs to the eukaryotic release factor 1 family. Pelota subfamily. Monomer. A divalent metal cation is required as a cofactor.

It localises to the cytoplasm. May function in recognizing stalled ribosomes, interact with stem-loop structures in stalled mRNA molecules, and effect endonucleolytic cleavage of the mRNA. May play a role in the release non-functional ribosomes and degradation of damaged mRNAs. Has endoribonuclease activity. This is Protein pelota homolog from Methanosphaera stadtmanae (strain ATCC 43021 / DSM 3091 / JCM 11832 / MCB-3).